The chain runs to 141 residues: Small ribosomal subunit protein bS6 (141 aa).

The segment at 96 to 141 is disordered; it reads VTGPSEMLKAEENRSERRERRERPEHADGAEGDDSNDSDNSDNADE. Over residues 103–124 the composition is skewed to basic and acidic residues; that stretch reads LKAEENRSERRERRERPEHADG. Acidic residues predominate over residues 125–141; that stretch reads AEGDDSNDSDNSDNADE.

It belongs to the bacterial ribosomal protein bS6 family.

In terms of biological role, binds together with bS18 to 16S ribosomal RNA. The protein is Small ribosomal subunit protein bS6 of Pseudomonas entomophila (strain L48).